A 307-amino-acid chain; its full sequence is Elongation factor Ts (307 aa).

An involved in Mg(2+) ion dislocation from EF-Tu region spans residues 80 to 83 (TDFV).

The protein belongs to the EF-Ts family.

The protein resides in the cytoplasm. Associates with the EF-Tu.GDP complex and induces the exchange of GDP to GTP. It remains bound to the aminoacyl-tRNA.EF-Tu.GTP complex up to the GTP hydrolysis stage on the ribosome. The chain is Elongation factor Ts from Rhodospirillum centenum (strain ATCC 51521 / SW).